The chain runs to 287 residues: ATP synthase gamma chain (287 aa).

It belongs to the ATPase gamma chain family. In terms of assembly, F-type ATPases have 2 components, CF(1) - the catalytic core - and CF(0) - the membrane proton channel. CF(1) has five subunits: alpha(3), beta(3), gamma(1), delta(1), epsilon(1). CF(0) has three main subunits: a, b and c.

It localises to the cell inner membrane. Its function is as follows. Produces ATP from ADP in the presence of a proton gradient across the membrane. The gamma chain is believed to be important in regulating ATPase activity and the flow of protons through the CF(0) complex. The polypeptide is ATP synthase gamma chain (Methylococcus capsulatus (strain ATCC 33009 / NCIMB 11132 / Bath)).